A 446-amino-acid chain; its full sequence is tRNA modification GTPase MnmE (446 aa).

3 residues coordinate (6S)-5-formyl-5,6,7,8-tetrahydrofolate: Arg21, Glu77, and Lys116. The TrmE-type G domain maps to 212 to 370 (GFRIALIGAP…LRAALASHVA (159 aa)). Asn222 lines the K(+) pocket. GTP is bound by residues 222–227 (NAGKST), 241–247 (TDVAGTT), and 266–269 (DTAG). Ser226 serves as a coordination point for Mg(2+). K(+) contacts are provided by Thr241, Val243, and Thr246. Thr247 is a Mg(2+) binding site. Position 446 (Lys446) interacts with (6S)-5-formyl-5,6,7,8-tetrahydrofolate.

It belongs to the TRAFAC class TrmE-Era-EngA-EngB-Septin-like GTPase superfamily. TrmE GTPase family. Homodimer. Heterotetramer of two MnmE and two MnmG subunits. The cofactor is K(+).

The protein resides in the cytoplasm. Functionally, exhibits a very high intrinsic GTPase hydrolysis rate. Involved in the addition of a carboxymethylaminomethyl (cmnm) group at the wobble position (U34) of certain tRNAs, forming tRNA-cmnm(5)s(2)U34. This chain is tRNA modification GTPase MnmE, found in Caulobacter vibrioides (strain ATCC 19089 / CIP 103742 / CB 15) (Caulobacter crescentus).